A 171-amino-acid chain; its full sequence is Acetyltransferase PA2271 (171 aa).

The N-acetyltransferase domain occupies 3–162 (YRIRTSRDED…HEQEIGFAAD (160 aa)). Residues 84–86 (LSI) and 128–130 (PFY) contribute to the CoA site.

Its function is as follows. Catalyzes the transfer of an acetyl group from acetyl coenzyme A (AcCoA) to an acceptor substrate and releases both CoA and the acetylated product. It can use a variety of substrates including spermidine, spermine and N(8)-acetylspermidine, 7-aminocephalosporanic acid, colistin and thiamine. This Pseudomonas aeruginosa (strain ATCC 15692 / DSM 22644 / CIP 104116 / JCM 14847 / LMG 12228 / 1C / PRS 101 / PAO1) protein is Acetyltransferase PA2271.